The following is a 277-amino-acid chain: Secoisolariciresinol dehydrogenase (277 aa).

NAD(+) contacts are provided by residues 24-29 (GGASGI), aspartate 48, valine 73, and asparagine 99. Serine 163 lines the substrate pocket. The active-site Proton donor/acceptor is the tyrosine 166. Residue lysine 170 participates in NAD(+) binding.

This sequence belongs to the short-chain dehydrogenases/reductases (SDR) family. As to quaternary structure, homotetramer.

The enzyme catalyses (-)-secoisolariciresinol + 2 NAD(+) = (-)-matairesinol + 2 NADH + 2 H(+). Functionally, oxidoreductase involved in lignan biosynthesis. Catalyzes the stereospecific conversion of (-)-secoisolariciresinol to (-)-matairesinol via a lactol intermediate. This Forsythia intermedia (Border forsythia) protein is Secoisolariciresinol dehydrogenase.